We begin with the raw amino-acid sequence, 308 residues long: Ribosomal protein L11 methyltransferase (308 aa).

The S-adenosyl-L-methionine site is built by threonine 148, glycine 169, aspartate 191, and asparagine 239.

The protein belongs to the methyltransferase superfamily. PrmA family.

The protein localises to the cytoplasm. It carries out the reaction L-lysyl-[protein] + 3 S-adenosyl-L-methionine = N(6),N(6),N(6)-trimethyl-L-lysyl-[protein] + 3 S-adenosyl-L-homocysteine + 3 H(+). Its function is as follows. Methylates ribosomal protein L11. This chain is Ribosomal protein L11 methyltransferase, found in Psychrobacter cryohalolentis (strain ATCC BAA-1226 / DSM 17306 / VKM B-2378 / K5).